The primary structure comprises 679 residues: Methionine--tRNA ligase (679 aa).

A 'HIGH' region motif is present at residues 14–24 (PYANGSIHLGH). Zn(2+) is bound by residues C145, C148, C158, and C161. The short motif at 331-335 (KMSKS) is the 'KMSKS' region element. K334 contacts ATP. The region spanning 577–679 (TFAAVDLRVA…SGAKPGQRIK (103 aa)) is the tRNA-binding domain.

The protein belongs to the class-I aminoacyl-tRNA synthetase family. MetG type 1 subfamily. In terms of assembly, homodimer. The cofactor is Zn(2+).

It is found in the cytoplasm. It carries out the reaction tRNA(Met) + L-methionine + ATP = L-methionyl-tRNA(Met) + AMP + diphosphate. Its function is as follows. Is required not only for elongation of protein synthesis but also for the initiation of all mRNA translation through initiator tRNA(fMet) aminoacylation. The chain is Methionine--tRNA ligase from Pseudomonas entomophila (strain L48).